The sequence spans 528 residues: Probable histone-arginine methyltransferase 1.4 (528 aa).

The residue at position 1 (methionine 1) is an N-acetylmethionine. The SAM-dependent MTase PRMT-type domain maps to 144–459 (EAASAKMYFH…QSYTINLTLS (316 aa)). The S-adenosyl-L-methionine site is built by glutamine 161, arginine 170, glycine 194, glutamate 216, and glutamate 246. Residues glutamate 260 and glutamate 269 contribute to the active site. Threonine 274 lines the S-adenosyl-L-methionine pocket.

This sequence belongs to the class I-like SAM-binding methyltransferase superfamily. Protein arginine N-methyltransferase family.

It localises to the nucleus. The protein localises to the cytoplasm. It carries out the reaction L-arginyl-[protein] + 2 S-adenosyl-L-methionine = N(omega),N(omega)-dimethyl-L-arginyl-[protein] + 2 S-adenosyl-L-homocysteine + 2 H(+). Its function is as follows. Methylates (mono- and asymmetric dimethylation) the guanidino nitrogens of arginyl residues in several proteins involved in DNA packaging, transcription regulation, and mRNA stability. Recruited to promoters upon gene activation, methylates histone H3 and activates transcription via chromatin remodeling. The sequence is that of Probable histone-arginine methyltransferase 1.4 (PRMT14) from Arabidopsis thaliana (Mouse-ear cress).